We begin with the raw amino-acid sequence, 196 residues long: 3-isopropylmalate dehydratase small subunit (196 aa).

It belongs to the LeuD family. LeuD type 1 subfamily. As to quaternary structure, heterodimer of LeuC and LeuD.

It catalyses the reaction (2R,3S)-3-isopropylmalate = (2S)-2-isopropylmalate. Its pathway is amino-acid biosynthesis; L-leucine biosynthesis; L-leucine from 3-methyl-2-oxobutanoate: step 2/4. In terms of biological role, catalyzes the isomerization between 2-isopropylmalate and 3-isopropylmalate, via the formation of 2-isopropylmaleate. This is 3-isopropylmalate dehydratase small subunit from Corynebacterium aurimucosum (strain ATCC 700975 / DSM 44827 / CIP 107346 / CN-1) (Corynebacterium nigricans).